The chain runs to 494 residues: 1-aminocyclopropane-1-carboxylate synthase 2 (494 aa).

Lys279 bears the N6-(pyridoxal phosphate)lysine mark. The disordered stretch occupies residues 474–494; that stretch reads NVLNSPHTMSPHSPLVRARTY. Positions 475–484 are enriched in polar residues; sequence VLNSPHTMSP.

Belongs to the class-I pyridoxal-phosphate-dependent aminotransferase family. Homodimer. It depends on pyridoxal 5'-phosphate as a cofactor.

It carries out the reaction S-adenosyl-L-methionine = 1-aminocyclopropane-1-carboxylate + S-methyl-5'-thioadenosine + H(+). It functions in the pathway alkene biosynthesis; ethylene biosynthesis via S-adenosyl-L-methionine; ethylene from S-adenosyl-L-methionine: step 1/2. Catalyzes the formation of 1-aminocyclopropane-1-carboxylate, a direct precursor of ethylene in higher plants. This Cucurbita pepo (Vegetable marrow) protein is 1-aminocyclopropane-1-carboxylate synthase 2 (ACS2).